A 192-amino-acid polypeptide reads, in one-letter code: Cytochrome b-245 light chain (192 aa).

At 2 to 7 (GQIEWA) the chain is on the cytoplasmic side. Residues 8–30 (MWANEQALASGLILITGGIVATA) traverse the membrane as a helical segment. Topologically, residues 31–35 (GQFAQ) are extracellular. A helical membrane pass occupies residues 36 to 53 (WYLGAYSIAAGVLICLLE). The Cytoplasmic portion of the chain corresponds to 54 to 69 (YPRGKRSKGSTMERCG). The stretch at 70-80 (QKYLTRAVKVF) is an intramembrane region. Topologically, residues 81–86 (GPLTSN) are cytoplasmic. Residues 87–104 (YYIRAFLHLGLSVPAGFL) traverse the membrane as a helical segment. Residue Leu105 is a topological domain, extracellular. Residues 106–126 (ATILGTACLAIASSIYLLAAI) form a helical membrane-spanning segment. Residues 127–192 (HGEHWTPIET…NPMPVTDEVV (66 aa)) are Cytoplasmic-facing. Residues 134-192 (IETKPKERPQVGGTIKQPPSNPPPRPPAEARKKPSEEEVAGVPGGGPQENPMPVTDEVV) are disordered. Thr147 carries the post-translational modification Phosphothreonine. Lys149 participates in a covalent cross-link: Glycyl lysine isopeptide (Lys-Gly) (interchain with G-Cter in ubiquitin). Ser168 is modified (phosphoserine).

It belongs to the p22phox family. In terms of assembly, component of the phagocyte NADPH oxidase core complex/cytochrome b558 complex, composed of CYBB (heavy chain (beta)) and CYBA (light chain (alpha)). Component of the phagocyte NADPH oxidase complex composed of an obligatory core heterodimer formed by the membrane proteins CYBA and CYBB and the cytosolic regulatory subunits NCF1/p47-phox, NCF2/p67-phox, NCF4/p40-phox and the small GTPase RAC1 or RAC2. Interacts with NCF1 (via SH3 domain). Interacts with SH3PXD2A. Interacts with DUOX1, DUOX2 and TPO. Interacts with NOX4; this interaction mediates superoxide generation. Interacts with calprotectin (S100A8/9). Interacts with GBP7. Interacts with NOXO1. Forms a heterodimer with NOX3 and is essential for activity and cell membrane localization of NOX3. Interacts with NOX1. In terms of processing, phosphorylation at Thr-147 enhances NADPH oxidase activity by promoting NCF1/p47-phox binding. Ubiquitinated at Lys-149 likely by RNF145.

It localises to the cell membrane. Its function is as follows. Subunit of NADPH oxidase complexes that is required for the NADPH oxidase activity that generates, in various cell types, superoxide from molecular oxygen utilizing NADPH as an electron donor. Subunit of the phagocyte NADPH oxidase complex that mediates the transfer of electrons from cytosolic NADPH to O2 to produce the superoxide anion (O2(-)). In the activated complex, electrons are first transferred from NADPH to flavin adenine dinucleotide (FAD) and subsequently transferred via two heme molecules to molecular oxygen, producing superoxide through an outer-sphere reaction. Activation of the NADPH oxidase complex is initiated by the assembly of cytosolic subunits of the NADPH oxidase complex with the core NADPH oxidase complex to form a complex at the plasma membrane or phagosomal membrane. This activation process is initiated by phosphorylation dependent binding of the cytosolic NCF1/p47-phox subunit to the C-terminus of CYBA/p22-phox. Aassociates with NOX3 to form a functional NADPH oxidase constitutively generating superoxide. In Tursiops truncatus (Atlantic bottle-nosed dolphin), this protein is Cytochrome b-245 light chain.